The following is a 670-amino-acid chain: Segment polarity protein dishevelled homolog DVL-1 (670 aa).

Positions 1–85 constitute a DIX domain; the sequence is MAETKIIYHM…RVVSWLVLAE (85 aa). The tract at residues 89 to 237 is disordered; the sequence is SDAGSQGTDS…LRQADRASSF (149 aa). Over residues 142-151 the composition is skewed to basic residues; the sequence is SHRRERARRR. Residues 152-171 show a composition bias toward basic and acidic residues; the sequence is NREEAARTNGHPRGDRRRDV. Positions 176-192 are enriched in low complexity; it reads DSASTALSSELESSSFV. The residue at position 194 (S194) is a Phosphoserine. Positions 200–214 are enriched in low complexity; the sequence is TSRLSSSTEQSTSSR. The segment covering 215 to 228 has biased composition (basic residues); that stretch reads LIRKHKRRRRKQRL. Residues 251 to 323 enclose the PDZ domain; that stretch reads TVTLNMERHH…NDDAVRVLRE (73 aa). In terms of domain architecture, DEP spans 400–474; it reads PDSGLEIRDR…SEQCYYVFGD (75 aa). The segment at 518 to 642 is disordered; the sequence is PGPPPCFPPA…PGGPPVRELA (125 aa). The segment covering 526 to 555 has biased composition (low complexity); sequence PAYQDPGFSYGSGSTGSQQSEGSKSSGSTR. A compositionally biased stretch (polar residues) spans 600–611; sequence SRGSSPRSQASA.

It belongs to the DSH family. Interacts with CXXC4. Interacts (via PDZ domain) with NXN. Interacts with BRD7 and INVS. Interacts (via PDZ domain) with VANGL1 and VANGL2 (via C-terminus). Interacts with ARRB1; the interaction is enhanced by phosphorylation of DVL1. Interacts with CYLD. Interacts (via PDZ domain) with RYK. Self-associates (via DIX domain) and forms higher homooligomers. Interacts (via PDZ domain) with DACT1 and FZD7, where DACT1 and FZD7 compete for the same binding site. Interacts (via DEP domain) with MUSK; the interaction is direct and mediates the formation a DVL1, MUSK and PAK1 ternary complex involved in AChR clustering. Interacts (via PDZ domain) with TMEM88. Interacts with DCDC2. Interacts with FOXK2. Interacts with PKD1 (via extracellular domain). Interacts (via PDZ domain) with CCDC88C/DAPLE; competes with CCDC88C for binding to frizzled receptor FZD7 and dissociates from CCDC88C following initiation of non-canonical Wnt signaling when CCDC88C displaces DVL1 from ligand-activated FZD7. Post-translationally, ubiquitinated; undergoes both 'Lys-48'-linked ubiquitination, leading to its subsequent degradation by the ubiquitin-proteasome pathway, and 'Lys-63'-linked ubiquitination. The interaction with INVS is required for ubiquitination. Deubiquitinated by CYLD, which acts on 'Lys-63'-linked ubiquitin chains.

The protein localises to the cell membrane. It is found in the cytoplasm. The protein resides in the cytosol. Its subcellular location is the cytoplasmic vesicle. Its function is as follows. Participates in Wnt signaling by binding to the cytoplasmic C-terminus of frizzled family members and transducing the Wnt signal to down-stream effectors. Plays a role both in canonical and non-canonical Wnt signaling. Plays a role in the signal transduction pathways mediated by multiple Wnt genes. Required for LEF1 activation upon WNT1 and WNT3A signaling. DVL1 and PAK1 form a ternary complex with MUSK which is important for MUSK-dependent regulation of AChR clustering during the formation of the neuromuscular junction (NMJ). The polypeptide is Segment polarity protein dishevelled homolog DVL-1 (DVL1) (Pan troglodytes (Chimpanzee)).